The chain runs to 356 residues: Phospho-N-acetylmuramoyl-pentapeptide-transferase (356 aa).

The next 10 helical transmembrane spans lie at Thr25–Ser45, Gly70–Trp90, Leu93–Phe113, Phe138–Leu158, Tyr164–Gly184, Gly195–Ser215, Val232–Phe252, Ala258–Val278, Ile284–Val304, and Gln333–Leu353.

The protein belongs to the glycosyltransferase 4 family. MraY subfamily. The cofactor is Mg(2+).

The protein localises to the cell inner membrane. The catalysed reaction is UDP-N-acetyl-alpha-D-muramoyl-L-alanyl-gamma-D-glutamyl-meso-2,6-diaminopimeloyl-D-alanyl-D-alanine + di-trans,octa-cis-undecaprenyl phosphate = di-trans,octa-cis-undecaprenyl diphospho-N-acetyl-alpha-D-muramoyl-L-alanyl-D-glutamyl-meso-2,6-diaminopimeloyl-D-alanyl-D-alanine + UMP. The protein operates within cell wall biogenesis; peptidoglycan biosynthesis. Its function is as follows. Catalyzes the initial step of the lipid cycle reactions in the biosynthesis of the cell wall peptidoglycan: transfers peptidoglycan precursor phospho-MurNAc-pentapeptide from UDP-MurNAc-pentapeptide onto the lipid carrier undecaprenyl phosphate, yielding undecaprenyl-pyrophosphoryl-MurNAc-pentapeptide, known as lipid I. The protein is Phospho-N-acetylmuramoyl-pentapeptide-transferase of Bartonella bacilliformis (strain ATCC 35685 / KC583 / Herrer 020/F12,63).